We begin with the raw amino-acid sequence, 167 residues long: SsrA-binding protein (167 aa).

The segment at 144-167 (HDKRAADKEKQSKKEVRSAMAKYQ) is disordered. The span at 146-160 (KRAADKEKQSKKEVR) shows a compositional bias: basic and acidic residues.

The protein belongs to the SmpB family.

It localises to the cytoplasm. Functionally, required for rescue of stalled ribosomes mediated by trans-translation. Binds to transfer-messenger RNA (tmRNA), required for stable association of tmRNA with ribosomes. tmRNA and SmpB together mimic tRNA shape, replacing the anticodon stem-loop with SmpB. tmRNA is encoded by the ssrA gene; the 2 termini fold to resemble tRNA(Ala) and it encodes a 'tag peptide', a short internal open reading frame. During trans-translation Ala-aminoacylated tmRNA acts like a tRNA, entering the A-site of stalled ribosomes, displacing the stalled mRNA. The ribosome then switches to translate the ORF on the tmRNA; the nascent peptide is terminated with the 'tag peptide' encoded by the tmRNA and targeted for degradation. The ribosome is freed to recommence translation, which seems to be the essential function of trans-translation. The protein is SsrA-binding protein of Synechococcus sp. (strain CC9902).